A 315-amino-acid polypeptide reads, in one-letter code: Protein-export membrane protein SecF (315 aa).

A run of 6 helical transmembrane segments spans residues 35–55 (MVLYPLVVFLVAALILAVHFP), 152–172 (QGIKAVIYAFIGMAIVVFLFF), 181–201 (IIFSAFSDMVIALATMGILGI), 205–225 (TATIAALLMLIGYTVDSNILL), 242–264 (LSAVSTGFTMSTTTLGALFILWL), and 282–302 (LLADFMNTWIFNAGVLRWYIA).

The protein belongs to the SecD/SecF family. SecF subfamily. Part of the protein translocation apparatus. Forms a complex with SecD.

It is found in the cell membrane. Functionally, involved in protein export. The chain is Protein-export membrane protein SecF from Thermococcus gammatolerans (strain DSM 15229 / JCM 11827 / EJ3).